Here is a 476-residue protein sequence, read N- to C-terminus: Ubiquinone biosynthesis monooxygenase COQ6, mitochondrial (476 aa).

The transit peptide at 1–35 (MAARIGSMAGLLCVRWWSSAQLAARGGPLVASQRW) directs the protein to the mitochondrion. An N6-succinyllysine modification is found at Lys-219.

The protein belongs to the UbiH/COQ6 family. As to quaternary structure, component of a multi-subunit COQ enzyme complex, composed of at least COQ3, COQ4, COQ5, COQ6, COQ7 and COQ9. Interacts with COQ8B and COQ7. The cofactor is FAD. As to expression, expressed in the kidney, in podocytes.

Its subcellular location is the mitochondrion inner membrane. The protein localises to the golgi apparatus. The protein resides in the cell projection. It catalyses the reaction 4-hydroxy-3-(all-trans-decaprenyl)benzoate + 2 reduced [2Fe-2S]-[ferredoxin] + O2 + 2 H(+) = 3,4-dihydroxy-5-(all-trans-decaprenyl)benzoate + 2 oxidized [2Fe-2S]-[ferredoxin] + H2O. It carries out the reaction 2-methoxy-6-(all-trans-decaprenyl)phenol + 2 reduced [2Fe-2S]-[ferredoxin] + O2 + 2 H(+) = 2-methoxy-6-(all-trans-decaprenyl)benzene-1,4-diol + 2 oxidized [2Fe-2S]-[ferredoxin] + H2O. The protein operates within cofactor biosynthesis; ubiquinone biosynthesis. In terms of biological role, FAD-dependent monooxygenase required for two non-consecutive steps during ubiquinone biosynthesis. Required for the C5-ring hydroxylation during ubiquinone biosynthesis by catalyzing the hydroxylation of 4-hydroxy-3-(all-trans-decaprenyl)benzoic acid to 3,4-dihydroxy-5-(all-trans-decaprenyl)benzoic acid. Also acts downstream of COQ4, for the C1-hydroxylation during ubiquinone biosynthesis by catalyzing the hydroxylation of 2-methoxy-6-(all-trans-decaprenyl)phenol to 2-methoxy-6-(all-trans-decaprenyl)benzene-1,4-diol. The electrons required for the hydroxylation reaction are funneled indirectly to COQ6 from NADPH via a ferredoxin/ferredoxin reductase system composed of FDX2 and FDXR. This chain is Ubiquinone biosynthesis monooxygenase COQ6, mitochondrial, found in Mus musculus (Mouse).